Here is a 1266-residue protein sequence, read N- to C-terminus: Formin-like protein 13 (1266 aa).

The Phosphatase tensin-type domain occupies 9–193; the sequence is YRKPPDGLLE…QYVSRRNLVS (185 aa). The active-site Phosphocysteine intermediate is Cys126. Positions 199–337 constitute a C2 tensin-type domain; it reads DRALTMDCVI…FRVELLFSDM (139 aa). 4 disordered regions span residues 497 to 568, 597 to 825, 881 to 902, and 1210 to 1266; these read KPLV…LQHS, KNLI…GKGR, SASA…PKPE, and QLEA…RTAP. Positions 529–538 are enriched in pro residues; it reads PPTPSPPHPV. The span at 617–644 shows a compositional bias: polar residues; it reads EPSSKTTNSLLLSPQASPATPTNPSKTV. Pro residues-rich tracts occupy residues 686–698, 706–742, 754–781, and 806–815; these read LPRP…PPPM, VPPP…PPTP, PPAP…PPPL, and PNVPPTPALP. Residues 829–1226 form the FH2 domain; sequence VNLKNSPAKK…KNAAEKEKPK (398 aa). Basic and acidic residues-rich tracts occupy residues 889–902, 1210–1248, and 1255–1266; these read GKSR…PKPE, QLEA…EKTK, and EMSDRLKERTAP.

The protein belongs to the formin-like family. Class-II subfamily.

The sequence is that of Formin-like protein 13 (FH13) from Arabidopsis thaliana (Mouse-ear cress).